A 256-amino-acid chain; its full sequence is 1-(5-phosphoribosyl)-5-[(5-phosphoribosylamino)methylideneamino] imidazole-4-carboxamide isomerase (256 aa).

Catalysis depends on Asp-8, which acts as the Proton acceptor. Catalysis depends on Asp-129, which acts as the Proton donor.

The protein belongs to the HisA/HisF family.

The protein localises to the cytoplasm. The enzyme catalyses 1-(5-phospho-beta-D-ribosyl)-5-[(5-phospho-beta-D-ribosylamino)methylideneamino]imidazole-4-carboxamide = 5-[(5-phospho-1-deoxy-D-ribulos-1-ylimino)methylamino]-1-(5-phospho-beta-D-ribosyl)imidazole-4-carboxamide. The protein operates within amino-acid biosynthesis; L-histidine biosynthesis; L-histidine from 5-phospho-alpha-D-ribose 1-diphosphate: step 4/9. This Synechococcus elongatus (strain ATCC 33912 / PCC 7942 / FACHB-805) (Anacystis nidulans R2) protein is 1-(5-phosphoribosyl)-5-[(5-phosphoribosylamino)methylideneamino] imidazole-4-carboxamide isomerase.